We begin with the raw amino-acid sequence, 272 residues long: ATP synthase subunit a (272 aa).

Transmembrane regions (helical) follow at residues 41-61 (VLNI…LSIF), 110-130 (FVWV…FPFI), 143-165 (VPSA…ILFY), 188-208 (VFFI…PISL), 222-242 (IFIL…NVPW), and 243-263 (AIFH…LTIV).

This sequence belongs to the ATPase A chain family. F-type ATPases have 2 components, CF(1) - the catalytic core - and CF(0) - the membrane proton channel. CF(1) has five subunits: alpha(3), beta(3), gamma(1), delta(1), epsilon(1). CF(0) has three main subunits: a(1), b(2) and c(9-12). The alpha and beta chains form an alternating ring which encloses part of the gamma chain. CF(1) is attached to CF(0) by a central stalk formed by the gamma and epsilon chains, while a peripheral stalk is formed by the delta and b chains.

The protein localises to the cell membrane. In terms of biological role, key component of the proton channel; it plays a direct role in the translocation of protons across the membrane. In Buchnera aphidicola subsp. Schizaphis graminum (strain Sg), this protein is ATP synthase subunit a.